Consider the following 217-residue polypeptide: Orotidine 5'-phosphate decarboxylase (217 aa).

Substrate-binding positions include Asp14, Lys36, 64–73, Ser120, 172–182, Gly197, and Arg198; these read DFKVADIPST and PGVGAQGGNLS. Lys66 (proton donor) is an active-site residue.

It belongs to the OMP decarboxylase family. Type 1 subfamily. In terms of assembly, homodimer.

It catalyses the reaction orotidine 5'-phosphate + H(+) = UMP + CO2. It participates in pyrimidine metabolism; UMP biosynthesis via de novo pathway; UMP from orotate: step 2/2. Catalyzes the decarboxylation of orotidine 5'-monophosphate (OMP) to uridine 5'-monophosphate (UMP). The protein is Orotidine 5'-phosphate decarboxylase of Methanococcus maripaludis (strain DSM 14266 / JCM 13030 / NBRC 101832 / S2 / LL).